We begin with the raw amino-acid sequence, 280 residues long: Succinate dehydrogenase [ubiquinone] iron-sulfur subunit, mitochondrial (280 aa).

The N-terminal 28 residues, 1 to 28 (MAAVVALSLRRRFPAAALGGARLQACRG), are a transit peptide targeting the mitochondrion. The 2Fe-2S ferredoxin-type domain maps to 40 to 133 (KKFAIYRWDP…VSKIYPLPHM (94 aa)). Residues lysine 51 and lysine 55 each carry the N6-acetyllysine modification. [2Fe-2S] cluster is bound by residues cysteine 93, cysteine 98, cysteine 101, and cysteine 113. Residues 146-218 (FYAQYKSIEP…PAVLMQAYRW (73 aa)) are interaction with SDHAF1. The 4Fe-4S ferredoxin-type domain occupies 176-206 (DREKLDGLYECILCACCSTSCPSYWWNGDKY). Residues cysteine 186, cysteine 189, and cysteine 192 each contribute to the [4Fe-4S] cluster site. [3Fe-4S] cluster is bound at residue cysteine 196. Tryptophan 201 lines the a ubiquinone pocket. Residues cysteine 243 and cysteine 249 each coordinate [3Fe-4S] cluster. Cysteine 253 lines the [4Fe-4S] cluster pocket.

It belongs to the succinate dehydrogenase/fumarate reductase iron-sulfur protein family. Component of complex II composed of four subunits: the flavoprotein (FP) SDHA, iron-sulfur protein (IP) SDHB, and a cytochrome b560 composed of SDHC and SDHD. Interacts with SDHAF1; the interaction is required for iron-sulfur cluster incorporation into SDHB. The cofactor is [2Fe-2S] cluster. [3Fe-4S] cluster serves as cofactor. Requires [4Fe-4S] cluster as cofactor.

It localises to the mitochondrion inner membrane. It catalyses the reaction a quinone + succinate = fumarate + a quinol. The catalysed reaction is (R)-malate + a quinone = enol-oxaloacetate + a quinol. It carries out the reaction (S)-malate + a quinone = enol-oxaloacetate + a quinol. The protein operates within carbohydrate metabolism; tricarboxylic acid cycle; fumarate from succinate (eukaryal route): step 1/1. Enol-oxaloacetate inhibits the succinate dehydrogenase activity. In terms of biological role, iron-sulfur protein (IP) subunit of the succinate dehydrogenase complex (mitochondrial respiratory chain complex II), responsible for transferring electrons from succinate to ubiquinone (coenzyme Q). SDH also oxidizes malate to the non-canonical enol form of oxaloacetate, enol-oxaloacetate. Enol-oxaloacetate, which is a potent inhibitor of the succinate dehydrogenase activity, is further isomerized into keto-oxaloacetate. The chain is Succinate dehydrogenase [ubiquinone] iron-sulfur subunit, mitochondrial (SDHB) from Bos taurus (Bovine).